The chain runs to 332 residues: Casein kinase II subunit alpha (332 aa).

The region spanning 34 to 319 (YEVVRKVGRG…ALEAMTHPYF (286 aa)) is the Protein kinase domain. ATP is bound by residues 40 to 48 (VGRGKYSEV) and K63. D151 acts as the Proton acceptor in catalysis.

Belongs to the protein kinase superfamily. Ser/Thr protein kinase family. CK2 subfamily. As to quaternary structure, tetramer of two alpha and two beta chains (possible).

It carries out the reaction L-seryl-[protein] + ATP = O-phospho-L-seryl-[protein] + ADP + H(+). It catalyses the reaction L-threonyl-[protein] + ATP = O-phospho-L-threonyl-[protein] + ADP + H(+). Its function is as follows. Casein kinases are operationally defined by their preferential utilization of acidic proteins such as caseins as substrates. The alpha chain contains the catalytic site. The polypeptide is Casein kinase II subunit alpha (ACK2) (Zea mays (Maize)).